The following is a 317-amino-acid chain: MTILVEHFVPDSRVDEKKVIEERDNELVLDGGFVVPKSKETDAFDAPDMNFLGHSFRDYENGESERQQGVEEFYRMQHIHQTYDFVKKMRKEYGKLNKMEMSIWECCELLNNVVDESDPDLDEPQIQHLLQTAEAIRRDYPDEDWLHLTALIHDLGKVLLLPEFGGLPQWAVVGDTFPVGCTFDSANIHHKYFKGNHDINNPKYNTKNGVYTEGCGLDNVLMSWGHDDYMYLVAKKNGTTLPHAGLFIIRYHSFYPLHKAGAYTHLMNDEDRDDLKWLHVFNKYDLYSKSKVLVDVEQVKPYYISLINKYFPAKLKW.

Substrate contacts are provided by residues arginine 57 and 115–117 (DES). The Fe cation site is built by histidine 128, histidine 153, and aspartate 154. Residues lysine 157 and 174–175 (GD) each bind substrate. 3 residues coordinate Fe cation: histidine 226, histidine 252, and aspartate 285. 252–253 (HS) serves as a coordination point for substrate.

Belongs to the myo-inositol oxygenase family. Fe cation serves as cofactor. Expressed mainly in roots, stems, flowers and siliques. Low expression in leaves.

It is found in the cytoplasm. The enzyme catalyses myo-inositol + O2 = D-glucuronate + H2O + H(+). Its pathway is polyol metabolism; myo-inositol degradation into D-glucuronate; D-glucuronate from myo-inositol: step 1/1. Involved in the biosynthesis of UDP-glucuronic acid (UDP-GlcA), providing nucleotide sugars for cell-wall polymers. May be also involved in plant ascorbate biosynthesis. The chain is Inositol oxygenase 2 (MIOX2) from Arabidopsis thaliana (Mouse-ear cress).